The following is a 258-amino-acid chain: Snake venom serine protease 3 (258 aa).

The first 18 residues, 1–18 (MVLIRVLANLLILQLSYA), serve as a signal peptide directing secretion. Positions 19 to 24 (QKSSEL) are excised as a propeptide. Residues 25–249 (VIGGDECNIN…YTDWIQSIIA (225 aa)) form the Peptidase S1 domain. Cystine bridges form between Cys31-Cys163, Cys50-Cys66, Cys98-Cys256, Cys142-Cys210, Cys174-Cys189, and Cys200-Cys225. N-linked (GlcNAc...) asparagine glycosylation is present at Asn44. Residue His65 is the Charge relay system of the active site. N-linked (GlcNAc...) asparagine glycosylation is present at Asn103. Asp110 acts as the Charge relay system in catalysis. N-linked (GlcNAc...) asparagine glycans are attached at residues Asn117, Asn121, and Asn154. Ser204 (charge relay system) is an active-site residue. An N-linked (GlcNAc...) asparagine glycan is attached at Asn251.

The protein belongs to the peptidase S1 family. Snake venom subfamily. As to quaternary structure, monomer. As to expression, expressed by the venom gland.

The protein localises to the secreted. Snake venom serine protease that may act in the hemostasis system of the prey. This Craspedocephalus gramineus (Bamboo pit viper) protein is Snake venom serine protease 3 (TLG3).